The sequence spans 336 residues: Putative transcription factor avaE (336 aa).

The segment at residues 32 to 100 is a DNA-binding region (WRKY); it reads TATRLNQTTF…VPLDQNESMP (69 aa).

Its subcellular location is the nucleus. Its pathway is secondary metabolite biosynthesis. In terms of biological role, putative transcription factor; part of the cluster that mediates the biosynthesis of a highly modified cyclo-arginine-tryptophan dipeptide (cRW). This is Putative transcription factor avaE from Aspergillus versicolor.